The following is a 420-amino-acid chain: Gamma-glutamyl phosphate reductase (420 aa).

This sequence belongs to the gamma-glutamyl phosphate reductase family.

The protein localises to the cytoplasm. The enzyme catalyses L-glutamate 5-semialdehyde + phosphate + NADP(+) = L-glutamyl 5-phosphate + NADPH + H(+). Its pathway is amino-acid biosynthesis; L-proline biosynthesis; L-glutamate 5-semialdehyde from L-glutamate: step 2/2. In terms of biological role, catalyzes the NADPH-dependent reduction of L-glutamate 5-phosphate into L-glutamate 5-semialdehyde and phosphate. The product spontaneously undergoes cyclization to form 1-pyrroline-5-carboxylate. This Neisseria meningitidis serogroup A / serotype 4A (strain DSM 15465 / Z2491) protein is Gamma-glutamyl phosphate reductase.